The sequence spans 148 residues: uncharacterized protein (148 aa).

A signal peptide spans 1-18; that stretch reads MKIILTVLAGVGLLSAGG. C19 is lipidated: N-palmitoyl cysteine. C19 is lipidated: S-diacylglycerol cysteine.

Its subcellular location is the cell membrane. This is an uncharacterized protein from Bacillus subtilis (strain 168).